We begin with the raw amino-acid sequence, 679 residues long: DNA-directed RNA polymerase subunit beta' (679 aa).

Positions 69, 71, 87, and 90 each coordinate Zn(2+). Mg(2+) is bound by residues D489, D491, and D493.

Belongs to the RNA polymerase beta' chain family. RpoC1 subfamily. As to quaternary structure, in plastids the minimal PEP RNA polymerase catalytic core is composed of four subunits: alpha, beta, beta', and beta''. When a (nuclear-encoded) sigma factor is associated with the core the holoenzyme is formed, which can initiate transcription. The cofactor is Mg(2+). Zn(2+) serves as cofactor.

The protein resides in the plastid. The protein localises to the chloroplast. It carries out the reaction RNA(n) + a ribonucleoside 5'-triphosphate = RNA(n+1) + diphosphate. In terms of biological role, DNA-dependent RNA polymerase catalyzes the transcription of DNA into RNA using the four ribonucleoside triphosphates as substrates. This chain is DNA-directed RNA polymerase subunit beta', found in Phalaenopsis aphrodite subsp. formosana (Moth orchid).